Here is a 431-residue protein sequence, read N- to C-terminus: Dihydroorotase (431 aa).

Zn(2+) contacts are provided by H59 and H61. Substrate contacts are provided by residues H61–R63 and N93. Zn(2+) is bound by residues D151, H178, H231, and D304. Residue D304 is part of the active site. Substrate contacts are provided by residues H308 and F322–G323.

It belongs to the metallo-dependent hydrolases superfamily. DHOase family. Class I DHOase subfamily. Requires Zn(2+) as cofactor.

The catalysed reaction is (S)-dihydroorotate + H2O = N-carbamoyl-L-aspartate + H(+). It participates in pyrimidine metabolism; UMP biosynthesis via de novo pathway; (S)-dihydroorotate from bicarbonate: step 3/3. Its function is as follows. Catalyzes the reversible cyclization of carbamoyl aspartate to dihydroorotate. This Thermoanaerobacter sp. (strain X514) protein is Dihydroorotase.